The chain runs to 196 residues: UMP-CMP kinase (196 aa).

Position 13–18 (13–18 (GAGKGT)) interacts with ATP. S33 carries the phosphoserine modification. An NMP region spans residues 33–63 (SAGELLRDERKNPDSQYGELIEKYIKEGKIV). An a ribonucleoside 5'-phosphate-binding site is contributed by R39. N6-acetyllysine is present on residues K43 and K55. A ribonucleoside 5'-phosphate is bound at residue 61-63 (KIV). A Glycyl lysine isopeptide (Lys-Gly) (interchain with G-Cter in SUMO2) cross-link involves residue K73. 93–96 (GFPR) contributes to the a ribonucleoside 5'-phosphate binding site. Position 100 (N100) interacts with CMP. K106 carries the N6-succinyllysine modification. The segment at 133–143 (ERGKSSGRSDD) is LID. R134 lines the ATP pocket. A ribonucleoside 5'-phosphate-binding residues include R140 and R151. Residue K179 coordinates ATP. Phosphoserine is present on S180.

This sequence belongs to the adenylate kinase family. UMP-CMP kinase subfamily. In terms of assembly, monomer. It depends on Mg(2+) as a cofactor.

The protein localises to the nucleus. It localises to the cytoplasm. The enzyme catalyses CMP + ATP = CDP + ADP. It carries out the reaction dCMP + ATP = dCDP + ADP. The catalysed reaction is UMP + ATP = UDP + ADP. It catalyses the reaction a 2'-deoxyribonucleoside 5'-diphosphate + ATP = a 2'-deoxyribonucleoside 5'-triphosphate + ADP. The enzyme catalyses a ribonucleoside 5'-diphosphate + ATP = a ribonucleoside 5'-triphosphate + ADP. Functionally, catalyzes the phosphorylation of pyrimidine nucleoside monophosphates at the expense of ATP. Plays an important role in de novo pyrimidine nucleotide biosynthesis. Has preference for UMP and CMP as phosphate acceptors. Also displays broad nucleoside diphosphate kinase activity. In Rattus norvegicus (Rat), this protein is UMP-CMP kinase (Cmpk1).